The primary structure comprises 425 residues: L-lysine N6-monooxygenase (425 aa).

Residue 8–14 (IGVGTGP) coordinates FAD.

The protein belongs to the lysine N(6)-hydroxylase/L-ornithine N(5)-oxygenase family. FAD is required as a cofactor.

The protein resides in the cytoplasm. Its subcellular location is the cell membrane. It carries out the reaction L-lysine + NADPH + O2 = N(6)-hydroxy-L-lysine + NADP(+) + H2O. It participates in siderophore biosynthesis; aerobactin biosynthesis. Its function is as follows. Flavoprotein monooxygenase required for N-hydroxylation of lysine. Involved in the biosynthesis of the siderophore aerobactin which is a chelator that mediates the high-affinity iron transport systems induced by the organism under iron-stressed conditions. This chain is L-lysine N6-monooxygenase, found in Escherichia coli.